The chain runs to 203 residues: Thymidylate kinase (203 aa).

10–17 (GMDGAGKS) is a binding site for ATP.

Belongs to the thymidylate kinase family.

It catalyses the reaction dTMP + ATP = dTDP + ADP. Phosphorylation of dTMP to form dTDP in both de novo and salvage pathways of dTTP synthesis. The protein is Thymidylate kinase of Methylobacillus flagellatus (strain ATCC 51484 / DSM 6875 / VKM B-1610 / KT).